Here is a 274-residue protein sequence, read N- to C-terminus: Hydroxyethylthiazole kinase (274 aa).

Methionine 54 provides a ligand contact to substrate. Residues arginine 129 and threonine 175 each coordinate ATP. A substrate-binding site is contributed by glycine 202.

Belongs to the Thz kinase family. Mg(2+) serves as cofactor.

It carries out the reaction 5-(2-hydroxyethyl)-4-methylthiazole + ATP = 4-methyl-5-(2-phosphooxyethyl)-thiazole + ADP + H(+). It functions in the pathway cofactor biosynthesis; thiamine diphosphate biosynthesis; 4-methyl-5-(2-phosphoethyl)-thiazole from 5-(2-hydroxyethyl)-4-methylthiazole: step 1/1. Catalyzes the phosphorylation of the hydroxyl group of 4-methyl-5-beta-hydroxyethylthiazole (THZ). In Granulibacter bethesdensis (strain ATCC BAA-1260 / CGDNIH1), this protein is Hydroxyethylthiazole kinase.